Reading from the N-terminus, the 141-residue chain is Large ribosomal subunit protein uL13 (141 aa).

The protein belongs to the universal ribosomal protein uL13 family. Part of the 50S ribosomal subunit.

This protein is one of the early assembly proteins of the 50S ribosomal subunit, although it is not seen to bind rRNA by itself. It is important during the early stages of 50S assembly. In Sulfurovum sp. (strain NBC37-1), this protein is Large ribosomal subunit protein uL13.